The sequence spans 479 residues: MLFPAFSILLISFFSLLSVVTTKTQYWCHGDGVLNNQHTCRFFTIVIDAGSTGTRLHLYKFIHDPAIASHGMPFKVEKEIFQEVKPGLSSFAKSPSSAADSLEPLLQRARKEVPHFMWEKTPITLKATAGLRLLPGDMADDILESVEERIFNSGFFAAFPDAVNVMPGSDEGVYSWFTLNILLETLFTDEPTVGHKPAAHRSVAAFDLGGGSTQLTYWPNNEAVFSEHVGYERDIDFFGHHIRLFTHSFLGNGLIAARLNILQLETDNEIESTHQLITSCMPEGYQLTEWEYALKFWNINGSSSHSFESCYGTTKNFVESSEIMHLRELKGSPVYLFSYFFDRALNSGLVKGNEGGKIELRQFKEAAEIACRREKTEIDDGSHWMPWQCLDLTYIYSLLRDGYQFEDNQPLVLAKKIKGMEVSWGQGLAFATANEFQLTEGAIKTALSSEPNSTVVDQIFDLVYSGTNQVLSYFNIISV.

Topologically, residues 1-7 (MLFPAFS) are cytoplasmic. Residues 8–24 (ILLISFFSLLSVVTTKT) form a helical; Signal-anchor for type II membrane protein membrane-spanning segment. Residues 25-479 (QYWCHGDGVL…VLSYFNIISV (455 aa)) are Lumenal-facing. Glutamate 171 acts as the Proton acceptor in catalysis. N-linked (GlcNAc...) asparagine glycans are attached at residues asparagine 300 and asparagine 452.

Belongs to the GDA1/CD39 NTPase family. Ca(2+) is required as a cofactor. Requires Mg(2+) as cofactor. Mn(2+) serves as cofactor.

It localises to the endomembrane system. The enzyme catalyses a ribonucleoside 5'-diphosphate + H2O = a ribonucleoside 5'-phosphate + phosphate + H(+). Its function is as follows. Hydrolyzes UDP and GDP but not any other nucleoside di-, mono- or triphosphates. May promote reglycosylation reactions involved in glycoproteins folding and quality control in the endoplasmic reticulum. The sequence is that of Nucleoside-diphosphatase uda-1 (uda-1) from Caenorhabditis elegans.